A 233-amino-acid polypeptide reads, in one-letter code: Small ribosomal subunit protein uS3 (233 aa).

The KH type-2 domain occupies 39 to 107; the sequence is VRQFLMKKLV…PAQINISEVR (69 aa).

This sequence belongs to the universal ribosomal protein uS3 family. As to quaternary structure, part of the 30S ribosomal subunit. Forms a tight complex with proteins S10 and S14.

In terms of biological role, binds the lower part of the 30S subunit head. Binds mRNA in the 70S ribosome, positioning it for translation. This Buchnera aphidicola subsp. Schizaphis graminum (strain Sg) protein is Small ribosomal subunit protein uS3.